A 594-amino-acid polypeptide reads, in one-letter code: Tyrosine-protein kinase RYK (594 aa).

An N-terminal signal peptide occupies residues 1–34; it reads MRAGRGGVPGSGGLRAPPPPLLLLLLAMLPAAAP. Residues 35–211 lie on the Extracellular side of the membrane; it reads RSPALAAAPA…VHAAPTTSTR (177 aa). The WIF domain occupies 50 to 178; the sequence is LYLSEDEVRR…VLNFKRRKMC (129 aa). N-linked (GlcNAc...) asparagine glycosylation is found at Asn123, Asn158, Asn162, Asn166, and Asn193. Residues 212–239 traverse the membrane as a helical segment; that stretch reads VFYISVGVCCAVIFLVAIILAVLHLHSM. Over 240-594 the chain is Cytoplasmic; the sequence is KRIELDDSIS…EFHAALGAYV (355 aa). The span at 250 to 266 shows a compositional bias: low complexity; it reads ASSSSQGLSQPSTQTTQ. A disordered region spans residues 250 to 283; that stretch reads ASSSSQGLSQPSTQTTQYLRADTPNNATPITSSS. A compositionally biased stretch (polar residues) spans 272 to 283; the sequence is TPNNATPITSSS. Residues 317–590 form the Protein kinase domain; that stretch reads ITLKDVLQEG…QCLTEFHAAL (274 aa). Residues 323-331 and Lys351 each bind ATP; that span reads LQEGTFGRI. The active-site Proton acceptor is the Asp452. Residue Tyr482 is modified to Phosphotyrosine; by autocatalysis.

This sequence belongs to the protein kinase superfamily. Tyr protein kinase family. In terms of assembly, interacts with DVL1 (via PDZ domain). In terms of processing, proteolytically cleaved, in part by presenilin, in response to WNT3 stimulation. Is detected in all the tissues. Highest levels are seen in the ovary, lung and placenta.

It localises to the membrane. It is found in the nucleus. The protein localises to the cytoplasm. It catalyses the reaction L-tyrosyl-[protein] + ATP = O-phospho-L-tyrosyl-[protein] + ADP + H(+). Its function is as follows. May be a coreceptor along with FZD8 of Wnt proteins, such as WNT1, WNT3, WNT3A and WNT5A. Involved in neuron differentiation, axon guidance, corpus callosum establishment and neurite outgrowth. In response to WNT3 stimulation, receptor C-terminal cleavage occurs in its transmembrane region and allows the C-terminal intracellular product to translocate from the cytoplasm to the nucleus where it plays a crucial role in neuronal development. This Mus musculus (Mouse) protein is Tyrosine-protein kinase RYK (Ryk).